The primary structure comprises 605 residues: F-box/WD repeat-containing protein 1A (605 aa).

The interval 128 to 177 (ASYEKEKELCVKYFEQWSESDQVEFVEHLISQMCHYQHGHINSYLKPMLQ) is homodimerization domain D. Positions 182 to 228 (TALPARGLDHIAENILSYLDAKSLCAAELVCKEWYRVTSDGMLWKKL) constitute an F-box domain. The required for down-regulation of SNAI1 stretch occupies residues 190-228 (DHIAENILSYLDAKSLCAAELVCKEWYRVTSDGMLWKKL). WD repeat units lie at residues 301–338 (ETSK…CKRI), 341–378 (GHTG…MLNT), 381–418 (HHCE…DITL), 424–461 (GHRA…FVRT), 464–503 (GHKR…RVLE), 505–541 (HEEL…DPRA), and 553–590 (EHSG…AAHA).

Homodimer. Self-associates. Component of the SCF(BTRC) complex, composed of SKP1, CUL1 and BTRC. Direct interaction with SKP1 with SKP1 occurs via the F-box domain. Interacts with phosphorylated ubiquitination substrates SMAD3 and SMAD4. Interacts with phosphorylated ubiquitination substrates CTNNB1, NFKBIA, NFKBIB, NFKBIE, NFKB1/nuclear factor NF-kappa-B p105 subunit, ATF4, CDC25A, DLG1, FBXO5 and SNAI1; the interaction requires the phosphorylation of the 2 serine residues in the substrate destruction motif D-S-G-X(2,3,4)-S. Binds UBQLN1. Interacts with CDC34 and UBE2R2. Interacts with FBXW11. Interacts with CUL4A and DDB1. Part of a SCF(BTRC)-like complex lacking CUL1, which is associated with phosphorylated NKBIA and RELA; RELA interacts directly with NFKBIA. Interacts with the phosphorylated form of GLI3. Interacts with CLU. Interacts with PER1 (phosphorylated), PER2 (phosphorylated) and PER3. Interacts with phosphorylated ubiquitination substrate CEP68. Interacts with ZC3H12A; this interaction occurs when ZC3H12A is phosphorylated in a IKBKB/IKKB-dependent manner. Interacts with HSF1; this interaction occurs during mitosis and induces HSF1 ubiquitin-dependent degradation, a process inhibited by CDC20. Interacts with NFE2L1. Interacts with INAVA. Interacts with IL10RA; this interaction leads to IL10RA ubiquitination and subsequent degradation. Interacts with REST. Interacts with KLF4; this interaction leads to KLF4 ubiquitination and subsequent degradation. Interacts with UBR2, as part of a SCF(BTRC) complex; the interaction mediates 'Lys-48'-linked ubiquitination of UBR2 and is regulated by DUSP22 in the T-cell receptor signaling pathway. Post-translationally, ubiquitinated via 'Lys-11'-linked polyubiquitin by some cullin-5-RING E3 ubiquitin-protein ligase complex (ECS complex), leading to its degradation. Deubiquitinated by OTUD5, promoting its stability. In terms of tissue distribution, expressed in heart, brain, liver, skeletal muscle and, most strongly, in testis.

The protein resides in the cytoplasm. Its subcellular location is the nucleus. The protein operates within protein modification; protein ubiquitination. Its function is as follows. Substrate recognition component of a SCF (SKP1-CUL1-F-box protein) E3 ubiquitin-protein ligase complex which mediates the ubiquitination and subsequent proteasomal degradation of target proteins. Recognizes and binds to phosphorylated target proteins. SCF(BTRC) mediates the ubiquitination of phosphorylated NFKB, ATF4, CDC25A, DLG1, FBXO5, PER1, SMAD3, SMAD4, SNAI1 and probably NFKB2. SCF(BTRC) mediates the ubiquitination of CTNNB1 and participates in Wnt signaling. SCF(BTRC) mediates the ubiquitination of NFKBIA, NFKBIB and NFKBIE; the degradation frees the associated NFKB1 to translocate into the nucleus and to activate transcription. Ubiquitination of NFKBIA occurs at 'Lys-21' and 'Lys-22'. The SCF(FBXW11) complex also regulates NF-kappa-B by mediating ubiquitination of phosphorylated NFKB1: specifically ubiquitinates the p105 form of NFKB1, leading to its degradation. SCF(BTRC) mediates the ubiquitination of CEP68; this is required for centriole separation during mitosis. SCF(BTRC) mediates the ubiquitination and subsequent degradation of nuclear NFE2L1. Has an essential role in the control of the clock-dependent transcription via degradation of phosphorylated PER1 and PER2. May be involved in ubiquitination and subsequent proteasomal degradation through a DBB1-CUL4 E3 ubiquitin-protein ligase. Required for activation of NFKB-mediated transcription by IL1B, MAP3K14, MAP3K1, IKBKB and TNF. Required for proteolytic processing of GLI3. Mediates ubiquitination of REST, thereby leading to its proteasomal degradation. SCF(BTRC) mediates the ubiquitination and subsequent proteasomal degradation of KLF4; thereby negatively regulating cell pluripotency maintenance and embryogenesis. SCF(BTRC) acts as a regulator of mTORC1 signaling pathway by catalyzing ubiquitination and subsequent proteasomal degradation of phosphorylated DEPTOR, TFE3 and MITF. SCF(BTRC) directs 'Lys-48'-linked ubiquitination of UBR2 in the T-cell receptor signaling pathway. In Mus musculus (Mouse), this protein is F-box/WD repeat-containing protein 1A.